The primary structure comprises 241 residues: Leucyl/phenylalanyl-tRNA--protein transferase (241 aa).

This sequence belongs to the L/F-transferase family.

Its subcellular location is the cytoplasm. The enzyme catalyses N-terminal L-lysyl-[protein] + L-leucyl-tRNA(Leu) = N-terminal L-leucyl-L-lysyl-[protein] + tRNA(Leu) + H(+). It catalyses the reaction N-terminal L-arginyl-[protein] + L-leucyl-tRNA(Leu) = N-terminal L-leucyl-L-arginyl-[protein] + tRNA(Leu) + H(+). The catalysed reaction is L-phenylalanyl-tRNA(Phe) + an N-terminal L-alpha-aminoacyl-[protein] = an N-terminal L-phenylalanyl-L-alpha-aminoacyl-[protein] + tRNA(Phe). In terms of biological role, functions in the N-end rule pathway of protein degradation where it conjugates Leu, Phe and, less efficiently, Met from aminoacyl-tRNAs to the N-termini of proteins containing an N-terminal arginine or lysine. This is Leucyl/phenylalanyl-tRNA--protein transferase from Neisseria meningitidis serogroup A / serotype 4A (strain DSM 15465 / Z2491).